The primary structure comprises 462 residues: Glycine--tRNA ligase (462 aa).

2 residues coordinate substrate: arginine 100 and glutamate 174. ATP is bound by residues arginine 206–glutamate 208, phenylalanine 216–phenylalanine 221, glutamate 290–leucine 291, and glycine 334–arginine 337. Phenylalanine 221–glutamate 225 lines the substrate pocket. Glutamate 330–glycine 334 contacts substrate.

Belongs to the class-II aminoacyl-tRNA synthetase family. As to quaternary structure, homodimer.

It localises to the cytoplasm. The catalysed reaction is tRNA(Gly) + glycine + ATP = glycyl-tRNA(Gly) + AMP + diphosphate. Catalyzes the attachment of glycine to tRNA(Gly). The polypeptide is Glycine--tRNA ligase (Alkaliphilus metalliredigens (strain QYMF)).